Reading from the N-terminus, the 756-residue chain is Multicystatin (756 aa).

Cystatin domains are found at residues 3–96 (IVGG…DDST), 97–191 (MPGG…DDIA), 192–285 (KLGG…DDSA), 286–380 (KTGG…DSAK), 381–474 (KLGG…DDSA), 475–568 (KLGG…DDSA), 569–662 (IIGG…DDSA), and 663–756 (KPGG…DATK). Short sequence motifs (secondary area of contact) lie at residues 48–52 (QIVAG), 142–146 (QVVAG), 237–241 (QVVAG), 331–335 (QLVSG), 426–430 (QVVAG), 520–524 (QLVAG), 614–618 (QLVAG), and 708–712 (QVVAG).

It belongs to the cystatin family. Phytocystatin subfamily. Expressed abundantly in tuber and leaf.

In terms of biological role, probably has a role in the plant's defense system. This chain is Multicystatin, found in Solanum tuberosum (Potato).